We begin with the raw amino-acid sequence, 304 residues long: DCN1-like protein 3 (304 aa).

Disordered regions lie at residues M1–S86 and E284–T304. The N-myristoyl glycine moiety is linked to residue G2. Residues S86–M278 enclose the DCUN1 domain.

Part of a complex containing DCUN1D3, CUL3 and RBX1. Interacts (via the DCUN1 domain) with the unneddylated cullins: interacts with CUL1, CUL2, CUL3, CUL4A, CUL4B and CUL5; these interactions promote the cullin neddylation and the identity of the cullin dictates the affinity of the interaction. Interacts preferentially with CUL3; this interaction triggers the relocalization of CUL3 to the cell membrane where CUL3 is neddylated. Interacts (via DCUN1 domain) with RBX1. May also interact with regulators or subunits of cullin-RING ligases such as RNF7, ELOB and DDB1; these interactions are bridged by cullins. Interacts (via DCUN1 domain) with CAND1; this interaction is bridged by cullins and strongly inhibits cullin neddylation. These CAND-cullin-DCNL complexes can only be neddylated in the presence of a substrate adapter. Interacts (via DCUN1 domain) with the N-terminally acetylated form of UBE2M and UBE2F.

The protein resides in the cell membrane. Its subcellular location is the cytoplasm. The protein localises to the nucleus. It is found in the perinuclear region. Contributes to the neddylation of all cullins by transferring NEDD8 from N-terminally acetylated NEDD8-conjugating E2s enzyme to different cullin C-terminal domain-RBX complexes and may play a role in the cell cycle progression by regulating the SCF ubiquitin E3 ligase complex, after UV damage. At the cell membrane, can promote and as well inhibit cullins neddylation. The polypeptide is DCN1-like protein 3 (Pongo abelii (Sumatran orangutan)).